The primary structure comprises 470 residues: Argininosuccinate synthase (470 aa).

ATP is bound by residues 17-25 and Ala-43; that span reads AFSGGLDTS. An L-citrulline-binding site is contributed by Tyr-99. ATP-binding residues include Gly-129 and Thr-131. L-aspartate is bound by residues Thr-131, Asn-135, and Asp-136. Asn-135 lines the L-citrulline pocket. Asp-136 lines the ATP pocket. The L-citrulline site is built by Arg-139 and Ser-192. Position 194 (Asp-194) interacts with ATP. 3 residues coordinate L-citrulline: Thr-201, Glu-203, and Glu-280. The segment at 448–470 is disordered; sequence IASRGESSGDELLDRAAMESGTD.

Belongs to the argininosuccinate synthase family. Type 2 subfamily. In terms of assembly, homotetramer.

The protein localises to the cytoplasm. It carries out the reaction L-citrulline + L-aspartate + ATP = 2-(N(omega)-L-arginino)succinate + AMP + diphosphate + H(+). It functions in the pathway amino-acid biosynthesis; L-arginine biosynthesis; L-arginine from L-ornithine and carbamoyl phosphate: step 2/3. This Kineococcus radiotolerans (strain ATCC BAA-149 / DSM 14245 / SRS30216) protein is Argininosuccinate synthase.